We begin with the raw amino-acid sequence, 456 residues long: Bifunctional protein GlmU (456 aa).

The pyrophosphorylase stretch occupies residues 1-229; the sequence is MLNSAMSVVI…ISETDGVNNR (229 aa). Residues 11–14, Lys25, Gln76, 81–82, 103–105, Gly140, Glu154, Asn169, and Asn227 contribute to the UDP-N-acetyl-alpha-D-glucosamine site; these read LAAG, GT, and YGD. Asp105 contributes to the Mg(2+) binding site. Mg(2+) is bound at residue Asn227. The linker stretch occupies residues 230–250; sequence LQLSRLERIYQAEQAEKLLLS. The interval 251-456 is N-acetyltransferase; that stretch reads GVMLRDPARF…QGWQRPVKKK (206 aa). Residues Arg333 and Lys351 each contribute to the UDP-N-acetyl-alpha-D-glucosamine site. The Proton acceptor role is filled by His363. UDP-N-acetyl-alpha-D-glucosamine contacts are provided by Tyr366 and Asn377. Residues Ala380, 386-387, Ser405, Ala423, and Arg440 each bind acetyl-CoA; that span reads NY.

This sequence in the N-terminal section; belongs to the N-acetylglucosamine-1-phosphate uridyltransferase family. The protein in the C-terminal section; belongs to the transferase hexapeptide repeat family. As to quaternary structure, homotrimer. Mg(2+) serves as cofactor.

It localises to the cytoplasm. The enzyme catalyses alpha-D-glucosamine 1-phosphate + acetyl-CoA = N-acetyl-alpha-D-glucosamine 1-phosphate + CoA + H(+). It catalyses the reaction N-acetyl-alpha-D-glucosamine 1-phosphate + UTP + H(+) = UDP-N-acetyl-alpha-D-glucosamine + diphosphate. It participates in nucleotide-sugar biosynthesis; UDP-N-acetyl-alpha-D-glucosamine biosynthesis; N-acetyl-alpha-D-glucosamine 1-phosphate from alpha-D-glucosamine 6-phosphate (route II): step 2/2. The protein operates within nucleotide-sugar biosynthesis; UDP-N-acetyl-alpha-D-glucosamine biosynthesis; UDP-N-acetyl-alpha-D-glucosamine from N-acetyl-alpha-D-glucosamine 1-phosphate: step 1/1. Its pathway is bacterial outer membrane biogenesis; LPS lipid A biosynthesis. Catalyzes the last two sequential reactions in the de novo biosynthetic pathway for UDP-N-acetylglucosamine (UDP-GlcNAc). The C-terminal domain catalyzes the transfer of acetyl group from acetyl coenzyme A to glucosamine-1-phosphate (GlcN-1-P) to produce N-acetylglucosamine-1-phosphate (GlcNAc-1-P), which is converted into UDP-GlcNAc by the transfer of uridine 5-monophosphate (from uridine 5-triphosphate), a reaction catalyzed by the N-terminal domain. The protein is Bifunctional protein GlmU of Salmonella schwarzengrund (strain CVM19633).